The primary structure comprises 95 residues: Small ribosomal subunit protein uS19 (95 aa).

Residues 73-95 form a disordered region; it reads EFSPTRSYRGHGADKNAKGSKKK.

It belongs to the universal ribosomal protein uS19 family.

Functionally, protein S19 forms a complex with S13 that binds strongly to the 16S ribosomal RNA. The sequence is that of Small ribosomal subunit protein uS19 from Deinococcus deserti (strain DSM 17065 / CIP 109153 / LMG 22923 / VCD115).